Here is a 199-residue protein sequence, read N- to C-terminus: Holliday junction branch migration complex subunit RuvA (199 aa).

The segment at 1–63 (MIDYIKGNLV…EDSQRLFGFT (63 aa)) is domain I. The tract at residues 64-142 (TRTERLLFEK…DMAPMLEPAA (79 aa)) is domain II. The tract at residues 143 to 153 (GADKQQKNPQL) is flexible linker. Positions 153–199 (LEDALEALRALGYVEKELKKVEKQLKAETLETDEYIRRALALMLKRP) are domain III.

This sequence belongs to the RuvA family. As to quaternary structure, homotetramer. Forms an RuvA(8)-RuvB(12)-Holliday junction (HJ) complex. HJ DNA is sandwiched between 2 RuvA tetramers; dsDNA enters through RuvA and exits via RuvB. An RuvB hexamer assembles on each DNA strand where it exits the tetramer. Each RuvB hexamer is contacted by two RuvA subunits (via domain III) on 2 adjacent RuvB subunits; this complex drives branch migration. In the full resolvosome a probable DNA-RuvA(4)-RuvB(12)-RuvC(2) complex forms which resolves the HJ.

The protein localises to the cytoplasm. The RuvA-RuvB-RuvC complex processes Holliday junction (HJ) DNA during genetic recombination and DNA repair, while the RuvA-RuvB complex plays an important role in the rescue of blocked DNA replication forks via replication fork reversal (RFR). RuvA specifically binds to HJ cruciform DNA, conferring on it an open structure. The RuvB hexamer acts as an ATP-dependent pump, pulling dsDNA into and through the RuvAB complex. HJ branch migration allows RuvC to scan DNA until it finds its consensus sequence, where it cleaves and resolves the cruciform DNA. The chain is Holliday junction branch migration complex subunit RuvA from Shouchella clausii (strain KSM-K16) (Alkalihalobacillus clausii).